A 353-amino-acid polypeptide reads, in one-letter code: sn-glycerol-3-phosphate import ATP-binding protein UgpC 3 (353 aa).

Residues I4 to I235 form the ABC transporter domain. An ATP-binding site is contributed by G37–S44.

This sequence belongs to the ABC transporter superfamily. sn-glycerol-3-phosphate importer (TC 3.A.1.1.3) family. In terms of assembly, the complex is composed of two ATP-binding proteins (UgpC), two transmembrane proteins (UgpA and UgpE) and a solute-binding protein (UgpB).

Its subcellular location is the cell inner membrane. The catalysed reaction is sn-glycerol 3-phosphate(out) + ATP + H2O = sn-glycerol 3-phosphate(in) + ADP + phosphate + H(+). Functionally, part of the ABC transporter complex UgpBAEC involved in sn-glycerol-3-phosphate (G3P) import. Responsible for energy coupling to the transport system. The chain is sn-glycerol-3-phosphate import ATP-binding protein UgpC 3 from Agrobacterium fabrum (strain C58 / ATCC 33970) (Agrobacterium tumefaciens (strain C58)).